The primary structure comprises 399 residues: Probable F-box protein At4g22060 (399 aa).

The F-box domain occupies 12-48; sequence SWSKLPLDLLIMVFERLGFVDFQRTKSVCLAWLYASR.

This is Probable F-box protein At4g22060 from Arabidopsis thaliana (Mouse-ear cress).